The chain runs to 161 residues: DNA-directed RNA polymerase 18 kDa subunit (161 aa).

The protein belongs to the poxviridae DNA-directed RNA polymerase 18 kDa subunit family. As to quaternary structure, the DNA-dependent RNA polymerase used for intermediate and late genes expression consists of eight subunits Rpo30/OPG66, Rpo7/OPG90, Rpo22/OPG103, Rpo147/OPG105, Rpo18/OPG119, Rpo19/OPG131, Rpo132/OPG151 and Rpo35/OPG156. The same holoenzyme, with the addition of the transcription-specificity factor OPG109, is used for early gene expression. In terms of processing, apparently non-glycosylated.

The protein localises to the virion. The enzyme catalyses RNA(n) + a ribonucleoside 5'-triphosphate = RNA(n+1) + diphosphate. In terms of biological role, part of the DNA-dependent RNA polymerase which catalyzes the transcription of viral DNA into RNA using the four ribonucleoside triphosphates as substrates. Responsible for the transcription of early, intermediate and late genes. DNA-dependent RNA polymerase associates with the early transcription factor (ETF), itself composed of OPG118 and OPG133, thereby allowing the early genes transcription. Late transcription, and probably also intermediate transcription, require newly synthesized RNA polymerase. This chain is DNA-directed RNA polymerase 18 kDa subunit (OPG119), found in Cynomys gunnisoni (Gunnison's prairie dog).